Reading from the N-terminus, the 475-residue chain is tRNA-2-methylthio-N(6)-dimethylallyladenosine synthase (475 aa).

The 118-residue stretch at 2–119 (AKLHITTWGC…LPEMINQIRS (118 aa)) folds into the MTTase N-terminal domain. [4Fe-4S] cluster contacts are provided by Cys-11, Cys-48, Cys-82, Cys-156, Cys-160, and Cys-163. In terms of domain architecture, Radical SAM core spans 142–374 (KAEGPTAFVS…QQRINHQAMQ (233 aa)). Positions 377 to 440 (RLMLGTEQRI…SNSLRGEVIR (64 aa)) constitute a TRAM domain.

It belongs to the methylthiotransferase family. MiaB subfamily. As to quaternary structure, monomer. It depends on [4Fe-4S] cluster as a cofactor.

It localises to the cytoplasm. It catalyses the reaction N(6)-dimethylallyladenosine(37) in tRNA + (sulfur carrier)-SH + AH2 + 2 S-adenosyl-L-methionine = 2-methylsulfanyl-N(6)-dimethylallyladenosine(37) in tRNA + (sulfur carrier)-H + 5'-deoxyadenosine + L-methionine + A + S-adenosyl-L-homocysteine + 2 H(+). In terms of biological role, catalyzes the methylthiolation of N6-(dimethylallyl)adenosine (i(6)A), leading to the formation of 2-methylthio-N6-(dimethylallyl)adenosine (ms(2)i(6)A) at position 37 in tRNAs that read codons beginning with uridine. The polypeptide is tRNA-2-methylthio-N(6)-dimethylallyladenosine synthase (Haemophilus ducreyi (strain 35000HP / ATCC 700724)).